A 150-amino-acid polypeptide reads, in one-letter code: D-aminoacyl-tRNA deacylase (150 aa).

A Gly-cisPro motif, important for rejection of L-amino acids motif is present at residues 136 to 137; sequence GP.

The protein belongs to the DTD family. In terms of assembly, homodimer.

The protein localises to the cytoplasm. The catalysed reaction is glycyl-tRNA(Ala) + H2O = tRNA(Ala) + glycine + H(+). The enzyme catalyses a D-aminoacyl-tRNA + H2O = a tRNA + a D-alpha-amino acid + H(+). In terms of biological role, an aminoacyl-tRNA editing enzyme that deacylates mischarged D-aminoacyl-tRNAs. Also deacylates mischarged glycyl-tRNA(Ala), protecting cells against glycine mischarging by AlaRS. Acts via tRNA-based rather than protein-based catalysis; rejects L-amino acids rather than detecting D-amino acids in the active site. By recycling D-aminoacyl-tRNA to D-amino acids and free tRNA molecules, this enzyme counteracts the toxicity associated with the formation of D-aminoacyl-tRNA entities in vivo and helps enforce protein L-homochirality. This chain is D-aminoacyl-tRNA deacylase, found in Staphylococcus carnosus (strain TM300).